Here is a 500-residue protein sequence, read N- to C-terminus: L-2-amino-4-chloropent-4-enoate dechlorinase/desaturase (500 aa).

Lysine 311 is subject to N6-(pyridoxal phosphate)lysine.

This sequence belongs to the trans-sulfuration enzymes family. The cofactor is pyridoxal 5'-phosphate.

The catalysed reaction is L-2-amino-4-chloropent-4-enoate = L-propargylglycine + chloride + H(+). It functions in the pathway amino-acid metabolism. It participates in antibiotic biosynthesis. Involved in the biosynthesis of terminal alkyne-containing amino acids such as L-propargylglycine (Pra) and L-beta-ethynylserine, that are produced as antibiotics by S.cattleya. Catalyzes gamma-elimination of chloride from 4-chloro-allyl-L-glycine (also named L-2-amino-4-chloropent-4-enoate), followed by an isomerization, to form the terminal-alkyne product L-propargylglycine. This is L-2-amino-4-chloropent-4-enoate dechlorinase/desaturase from Streptantibioticus cattleyicolor (strain ATCC 35852 / DSM 46488 / JCM 4925 / NBRC 14057 / NRRL 8057) (Streptomyces cattleya).